The primary structure comprises 498 residues: Glycerol kinase (498 aa).

Thr-12 serves as a coordination point for ADP. Thr-12, Thr-13, and Ser-14 together coordinate ATP. Thr-12 provides a ligand contact to sn-glycerol 3-phosphate. Arg-16 lines the ADP pocket. Residues Arg-82, Glu-83, and Tyr-134 each contribute to the sn-glycerol 3-phosphate site. Glycerol-binding residues include Arg-82, Glu-83, and Tyr-134. His-230 is modified (phosphohistidine; by HPr). Asp-244 provides a ligand contact to sn-glycerol 3-phosphate. Residues Asp-244 and Gln-245 each coordinate glycerol. Residues Thr-266 and Gly-309 each contribute to the ADP site. Thr-266, Gly-309, Gln-313, and Gly-410 together coordinate ATP. Positions 410 and 414 each coordinate ADP.

This sequence belongs to the FGGY kinase family. Homotetramer and homodimer (in equilibrium). The phosphoenolpyruvate-dependent sugar phosphotransferase system (PTS), including enzyme I, and histidine-containing protein (HPr) are required for the phosphorylation, which leads to the activation of the enzyme.

The catalysed reaction is glycerol + ATP = sn-glycerol 3-phosphate + ADP + H(+). Its pathway is polyol metabolism; glycerol degradation via glycerol kinase pathway; sn-glycerol 3-phosphate from glycerol: step 1/1. With respect to regulation, activated by phosphorylation and inhibited by fructose 1,6-bisphosphate (FBP). Functionally, key enzyme in the regulation of glycerol uptake and metabolism. Catalyzes the phosphorylation of glycerol to yield sn-glycerol 3-phosphate. This Staphylococcus aureus (strain bovine RF122 / ET3-1) protein is Glycerol kinase.